Consider the following 686-residue polypeptide: DNA ligase (686 aa).

NAD(+) contacts are provided by residues 45-49 (DNEYD), 94-95 (SL), and Glu-127. The active-site N6-AMP-lysine intermediate is the Lys-129. Positions 150, 187, 302, and 326 each coordinate NAD(+). 4 residues coordinate Zn(2+): Cys-420, Cys-423, Cys-438, and Cys-444. The 82-residue stretch at 605–686 (LDNLPLEGQT…DEFLKMIGAS (82 aa)) folds into the BRCT domain.

Belongs to the NAD-dependent DNA ligase family. LigA subfamily. It depends on Mg(2+) as a cofactor. Mn(2+) is required as a cofactor.

It carries out the reaction NAD(+) + (deoxyribonucleotide)n-3'-hydroxyl + 5'-phospho-(deoxyribonucleotide)m = (deoxyribonucleotide)n+m + AMP + beta-nicotinamide D-nucleotide.. In terms of biological role, DNA ligase that catalyzes the formation of phosphodiester linkages between 5'-phosphoryl and 3'-hydroxyl groups in double-stranded DNA using NAD as a coenzyme and as the energy source for the reaction. It is essential for DNA replication and repair of damaged DNA. This is DNA ligase from Psychrobacter sp. (strain PRwf-1).